The sequence spans 306 residues: N-acetylmuramic acid/N-acetylglucosamine kinase (306 aa).

An ATP-binding site is contributed by serine 12. Asparagine 35 lines the substrate pocket. Position 124 (threonine 124) interacts with ATP. Substrate contacts are provided by residues 142–144 (GWG) and aspartate 149. Alanine 208 contacts ATP.

The protein belongs to the eukaryotic-type N-acetylglucosamine kinase family. The cofactor is Mg(2+).

Its subcellular location is the cytoplasm. The catalysed reaction is N-acetyl-D-glucosamine + ATP = N-acetyl-D-glucosamine 6-phosphate + ADP + H(+). It carries out the reaction N-acetyl-D-muramate + ATP = N-acetyl-D-muramate 6-phosphate + ADP + H(+). It participates in cell wall biogenesis; peptidoglycan recycling. Functionally, catalyzes the ATP-dependent phosphorylation of both cell wall (peptidoglycan) amino sugars, N-acetylmuramic acid (MurNAc) and N-acetylglucosamine (GlcNAc), at the 6-hydroxyl group. Neither the non-N-acetylated forms of the cell wall sugars, i.e., glucosamine and/or muramic acid, nor epimeric hexoses or 1,6-anhydro-MurNAc are substrates for the enzyme. May have a role in the rescue of the murein sugars GlcNAc and MurNAc released from muropeptides during cell wall turnover in C.acetobutylicum. This chain is N-acetylmuramic acid/N-acetylglucosamine kinase, found in Clostridium acetobutylicum (strain ATCC 824 / DSM 792 / JCM 1419 / IAM 19013 / LMG 5710 / NBRC 13948 / NRRL B-527 / VKM B-1787 / 2291 / W).